Here is a 165-residue protein sequence, read N- to C-terminus: Leukotoxin-activating lysine-acyltransferase LktC (165 aa).

Residues His-22 and Asp-91 contribute to the active site.

Belongs to the RTX toxin acyltransferase family.

It localises to the cytoplasm. The catalysed reaction is a fatty acyl-[ACP] + L-lysyl-[protein] = N(6)-(fatty acyl)-L-lysyl-[protein] + holo-[ACP] + H(+). Involved in fatty acylation of the protoxin (LktA) at two internal lysine residues, thereby converting it to the active toxin. The protein is Leukotoxin-activating lysine-acyltransferase LktC (lktC) of Pasteurella haemolytica-like sp. (strain 5943B).